The primary structure comprises 246 residues: Bis(5'-nucleosyl)-tetraphosphatase PrpE [asymmetrical] (246 aa).

This sequence belongs to the PrpE family. Requires Ni(2+) as cofactor.

It carries out the reaction P(1),P(4)-bis(5'-guanosyl) tetraphosphate + H2O = GMP + GTP + 2 H(+). Its function is as follows. Asymmetrically hydrolyzes Ap4p to yield AMP and ATP. The protein is Bis(5'-nucleosyl)-tetraphosphatase PrpE [asymmetrical] of Halalkalibacterium halodurans (strain ATCC BAA-125 / DSM 18197 / FERM 7344 / JCM 9153 / C-125) (Bacillus halodurans).